The sequence spans 184 residues: Protein Syd (184 aa).

The protein belongs to the Syd family.

The protein localises to the cell inner membrane. Functionally, interacts with the SecY protein in vivo. May bind preferentially to an uncomplexed state of SecY, thus functioning either as a chelating agent for excess SecY in the cell or as a regulatory factor that negatively controls the translocase function. The protein is Protein Syd of Photorhabdus laumondii subsp. laumondii (strain DSM 15139 / CIP 105565 / TT01) (Photorhabdus luminescens subsp. laumondii).